The chain runs to 170 residues: MTIKAEDLPYRPCAGIMVLNAQGLVWAGRRIKEGNSEYDGSPQLWQMPQGGIDDGERPLTAAIRELYEETGMKTVTLLAEASDWIHYDLPPELIGIGLRGKYRGQAQRWFAFRFEGDESEIQIDPPPTGHSAEFDAWDWKPMESLPELIVPFKRAVYEKVVAEFQHLSGK.

The Nudix hydrolase domain occupies Pro9–Ala162. A Nudix box motif is present at residues Gly50–Gly71.

It belongs to the Nudix hydrolase family. RppH subfamily. A divalent metal cation serves as cofactor.

Its function is as follows. Accelerates the degradation of transcripts by removing pyrophosphate from the 5'-end of triphosphorylated RNA, leading to a more labile monophosphorylated state that can stimulate subsequent ribonuclease cleavage. The sequence is that of RNA pyrophosphohydrolase from Agrobacterium fabrum (strain C58 / ATCC 33970) (Agrobacterium tumefaciens (strain C58)).